We begin with the raw amino-acid sequence, 708 residues long: G-box-binding factor (708 aa).

2 disordered regions span residues 1-29 and 123-339; these read MLSTHHHQGNSSSSSSSSSPSQTIGGSDL and QQAQ…QTIP. Low complexity-rich tracts occupy residues 11–21, 123–219, and 227–316; these read SSSSSSSSSPS, QQAQ…QHHQ, and SQPQ…SPST. The segment covering 324 to 333 has biased composition (basic and acidic residues); it reads ETSNSEKKDS. A run of 2 repeats spans residues 339–368 and 481–510. A disordered region spans residues 511–604; it reads VGAGLSPSSS…PTYSPNPSLP (94 aa). Over residues 516–590 the composition is skewed to low complexity; sequence SPSSSPSSPK…SSISQSPLQL (75 aa). Positions 591–600 are enriched in polar residues; that stretch reads NYQTPTYSPN.

It is found in the nucleus. CAMP-responsive transcriptional activator regulating late gene expression. Essential component of the developmental switch between early and late development. Binds to a number of CA/GT-rich gene regulatory elements. The protein is G-box-binding factor (gbfA) of Dictyostelium discoideum (Social amoeba).